Reading from the N-terminus, the 3078-residue chain is Probable polyketide synthase 34 (3078 aa).

In terms of domain architecture, Ketosynthase family 3 (KS3) spans 28–462; the sequence is SGDVAVIGIG…GSNVCLILSE (435 aa). Catalysis depends on for beta-ketoacyl synthase activity residues Cys-200, His-339, and His-385. The segment at 665–698 is acyl/malonyl transferase; the sequence is GVSADIIIGHSLGEISSSYCSGIIDFQTLCYLTY. Ser-675 serves as the catalytic For acyl/malonyl transferase activity. The N-terminal hotdog fold stretch occupies residues 954 to 1083; the sequence is HEKIKNEGPS…GNFSLTKHNI (130 aa). A PKS/mFAS DH domain is found at 954–1264; the sequence is HEKIKNEGPS…CTIVGSNPDS (311 aa). The active-site Proton acceptor; for dehydratase activity is the His-995. The segment at 1099–1264 is C-terminal hotdog fold; it reads NFTSISKQDL…CTIVGSNPDS (166 aa). Asp-1171 functions as the Proton donor; for dehydratase activity in the catalytic mechanism. The segment at 1375–1396 is disordered; it reads NINNNNNNNNNNNNNNNNNSNG. The 78-residue stretch at 2541–2618 folds into the Carrier domain; sequence DNNEIIRSTI…QSIEIIKSAH (78 aa). An O-(pantetheine 4'-phosphoryl)serine modification is found at Ser-2578. Disordered stretches follow at residues 2617-2640 and 2739-2761; these read AHNN…NNNN and NKGS…DNNS. Over residues 2619–2640 the composition is skewed to low complexity; sequence NNNNNNNNNNNNNNNNNNNNNN. A coiled-coil region spans residues 2621-2652; it reads NNNNNNNNNNNNNNNNNNNNLVKKEQQSLDEF.

Pantetheine 4'-phosphate is required as a cofactor.

Its function is as follows. Probable polyketide synthase. In Dictyostelium discoideum (Social amoeba), this protein is Probable polyketide synthase 34 (pks34).